Here is a 630-residue protein sequence, read N- to C-terminus: Cytochrome B pre-mRNA-processing protein 2 (630 aa).

It is found in the mitochondrion. Functionally, appears to be specifically required for the splicing of the terminal intron (bI5) of the cytochrome b pre-mRNA. Can also stimulates the splicing of the omega intron of the precursor of large ribosomal RNA. The protein is Cytochrome B pre-mRNA-processing protein 2 (CBP2) of Saccharomyces paradoxus (Yeast).